Reading from the N-terminus, the 501-residue chain is MAQALPWLLLWMGAGVLPAHGTQHGIRLPLRSGLGGAPLGLRLPRETDEEPEEPGRRGSFVEMVDNLRGKSGQGYYVEMTVGSPPQTLNILVDTGSSNFAVGAAPHPFLHRYYQRQLSSTYRDLRKGVYVPYTQGKWEGELGTDLVSIPHGPNVTVRANIAAITESDKFFINGSNWEGILGLAYAEIARPDDSLEPFFDSLVKQTHVPNLFSLQLCGAGFPLNQSEVLASVGGSMIIGGIDHSLYTGSLWYTPIRREWYYEVIIVRVEINGQDLKMDCKEYNYDKSIVDSGTTNLRLPKKVFEAAVKSIKAASSTEKFPDGFWLGEQLVCWQAGTTPWNIFPVISLYLMGEVTNQSFRITILPQQYLRPVEDVATSQDDCYKFAISQSSTGTVMGAVIMEGFYVVFDRARKRIGFAVSACHVHDEFRTAAVEGPFVTLDMEDCGYNIPQTDESTLMTIAYVMAAICALFMLPLCLMVCQWRCLRCLRQQHDDFADDISLLK.

The signal sequence occupies residues 1–21; sequence MAQALPWLLLWMGAGVLPAHG. Residues 22–45 constitute a propeptide that is removed on maturation; sequence TQHGIRLPLRSGLGGAPLGLRLPR. The Extracellular segment spans residues 22–457; that stretch reads TQHGIRLPLR…PQTDESTLMT (436 aa). The interval 39–58 is disordered; it reads LGLRLPRETDEEPEEPGRRG. In terms of domain architecture, Peptidase A1 spans 75–416; the sequence is YYVEMTVGSP…DRARKRIGFA (342 aa). D93 is a catalytic residue. Residue K126 is modified to N6-acetyllysine. 3 N-linked (GlcNAc...) asparagine glycosylation sites follow: N153, N172, and N223. Disulfide bonds link C216/C420, C278/C443, and C330/C380. An N6-acetyllysine mark is found at K275, K279, and K285. The active site involves D289. N6-acetyllysine occurs at positions 299, 300, and 307. The N-linked (GlcNAc...) asparagine glycan is linked to N354. The chain crosses the membrane as a helical span at residues 458–478; that stretch reads IAYVMAAICALFMLPLCLMVC. 4 S-palmitoyl cysteine lipidation sites follow: C474, C478, C482, and C485. Over 479-501 the chain is Cytoplasmic; it reads QWRCLRCLRQQHDDFADDISLLK. The segment at 479–501 is interaction with RTN3; the sequence is QWRCLRCLRQQHDDFADDISLLK. The DXXLL signature appears at 496–500; the sequence is DISLL. A Phosphoserine modification is found at S498. K501 is covalently cross-linked (Glycyl lysine isopeptide (Lys-Gly) (interchain with G-Cter in ubiquitin)).

This sequence belongs to the peptidase A1 family. As to quaternary structure, monomer. Interacts (via DXXLL motif) with GGA1, GGA2 and GGA3 (via their VHS domain); the interaction highly increases when BACE1 is phosphorylated at Ser-498. Interacts with RTN1; RTN2; RTN3 and RTN4; the interaction leads to inhibition of amyloid precursor protein processing. Interacts with SNX6. Interacts with PCSK9. Interacts with NAT8 and NAT8B. Interacts with BIN1. Interacts (via extracellular domain) with ADAM10 (via extracellular domain). Interacts with SORL1; this interaction may affect binding with APP and hence reduce APP cleavage. Interacts with NRDC AND NRG1. In terms of processing, N-Glycosylated. Addition of a bisecting N-acetylglucosamine by MGAT3 blocks lysosomal targeting, further degradation and is required for maintaining stability under stress conditions. Post-translationally, acetylated in the endoplasmic reticulum at Lys-126, Lys-275, Lys-279, Lys-285, Lys-299, Lys-300 and Lys-307. Acetylation by NAT8 and NAT8B is transient and deacetylation probably occurs in the Golgi. Acetylation regulates the maturation, the transport to the plasma membrane, the stability and the expression of the protein. Palmitoylation mediates lipid raft localization. In terms of processing, ubiquitinated at Lys-501, ubiquitination leads to lysosomal degradation. Monoubiquitinated and 'Lys-63'-linked polyubitinated. Deubiquitnated by USP8; inhibits lysosomal degradation. Post-translationally, phosphorylation at Ser-498 is required for interaction with GGA1 and retrograded transport from endosomal compartments to the trans-Golgi network. Non-phosphorylated BACE1 enters a direct recycling route to the cell surface. As to expression, expressed at high levels in the brain and pancreas. In the brain, expression is highest in the substantia nigra, locus coruleus and medulla oblongata.

The protein localises to the cell membrane. The protein resides in the golgi apparatus. Its subcellular location is the trans-Golgi network. It localises to the endoplasmic reticulum. It is found in the endosome. The protein localises to the cell surface. The protein resides in the cytoplasmic vesicle membrane. Its subcellular location is the membrane raft. It localises to the lysosome. It is found in the late endosome. The protein localises to the early endosome. The protein resides in the recycling endosome. Its subcellular location is the cell projection. It localises to the axon. It is found in the dendrite. The catalysed reaction is Broad endopeptidase specificity. Cleaves Glu-Val-Asn-Leu-|-Asp-Ala-Glu-Phe in the Swedish variant of Alzheimer's amyloid precursor protein.. Inhibited by RTN3 and RTN4. Responsible for the proteolytic processing of the amyloid precursor protein (APP). Cleaves at the N-terminus of the A-beta peptide sequence, between residues 671 and 672 of APP, leads to the generation and extracellular release of beta-cleaved soluble APP, and a corresponding cell-associated C-terminal fragment which is later released by gamma-secretase. Cleaves CHL1. This chain is Beta-secretase 1, found in Homo sapiens (Human).